A 66-amino-acid chain; its full sequence is Conotoxin Cal5.2 (66 aa).

A signal peptide spans 1–20 (MMYCLPVVCILLLLIPSSAT). Residues 21–51 (FVVESRLEKDQAQSFTGDAWKRVSPIHEMIQ) constitute a propeptide that is removed on maturation. V65 bears the Valine amide mark.

This sequence belongs to the conotoxin T superfamily. In terms of processing, contains 2 disulfide bonds that can be either 'C1-C3, C2-C4' or 'C1-C4, C2-C3', since these disulfide connectivities have been observed for conotoxins with cysteine framework V (for examples, see AC P0DQQ7 and AC P81755). Expressed by the venom duct.

The protein localises to the secreted. Its function is as follows. Probable neurotoxin with unknown target. Possibly targets ion channels. The chain is Conotoxin Cal5.2 from Californiconus californicus (California cone).